Reading from the N-terminus, the 351-residue chain is UDP-N-acetylglucosamine--N-acetylmuramyl-(pentapeptide) pyrophosphoryl-undecaprenol N-acetylglucosamine transferase (351 aa).

Residues 13 to 15 (TGG), N125, R161, S189, I241, 260 to 265 (ALTVCE), and Q285 each bind UDP-N-acetyl-alpha-D-glucosamine.

This sequence belongs to the glycosyltransferase 28 family. MurG subfamily.

It is found in the cell inner membrane. It catalyses the reaction di-trans,octa-cis-undecaprenyl diphospho-N-acetyl-alpha-D-muramoyl-L-alanyl-D-glutamyl-meso-2,6-diaminopimeloyl-D-alanyl-D-alanine + UDP-N-acetyl-alpha-D-glucosamine = di-trans,octa-cis-undecaprenyl diphospho-[N-acetyl-alpha-D-glucosaminyl-(1-&gt;4)]-N-acetyl-alpha-D-muramoyl-L-alanyl-D-glutamyl-meso-2,6-diaminopimeloyl-D-alanyl-D-alanine + UDP + H(+). The protein operates within cell wall biogenesis; peptidoglycan biosynthesis. Its function is as follows. Cell wall formation. Catalyzes the transfer of a GlcNAc subunit on undecaprenyl-pyrophosphoryl-MurNAc-pentapeptide (lipid intermediate I) to form undecaprenyl-pyrophosphoryl-MurNAc-(pentapeptide)GlcNAc (lipid intermediate II). In Haemophilus influenzae (strain PittGG), this protein is UDP-N-acetylglucosamine--N-acetylmuramyl-(pentapeptide) pyrophosphoryl-undecaprenol N-acetylglucosamine transferase.